Consider the following 414-residue polypeptide: Esterase FrsA (414 aa).

It belongs to the FrsA family.

It carries out the reaction a carboxylic ester + H2O = an alcohol + a carboxylate + H(+). Catalyzes the hydrolysis of esters. This is Esterase FrsA from Escherichia coli O17:K52:H18 (strain UMN026 / ExPEC).